Consider the following 574-residue polypeptide: Probable cytochrome c oxidase subunit 1 (574 aa).

Residues 40–60 (IGIMYCVACFIFFFVGGLLAL) traverse the membrane as a helical segment. His86 is a binding site for Fe(II)-heme a. Helical transmembrane passes span 89–109 (IMLL…VLPL), 121–141 (LNAF…AGFI), 170–190 (LWIM…VNMI), 213–233 (ILVT…ALFG), 258–278 (LFWF…FGIV), and 290–310 (IFGY…SVAV). Cu cation is bound by residues His264 and Tyr268. The 1'-histidyl-3'-tyrosine (His-Tyr) cross-link spans 264 to 268 (HPEVY). Cu cation is bound by residues His313 and His314. The next 2 membrane-spanning stretches (helical) occupy residues 315 to 335 (MFAT…LIAV) and 359 to 379 (MLFS…GVLL). Residue His397 participates in heme a3 binding. A run of 3 helical transmembrane segments spans residues 398–418 (FHYV…YFWF), 433–453 (LHFW…HWLG), and 476–496 (VSTI…WNVF). His399 serves as a coordination point for Fe(II)-heme a.

Belongs to the heme-copper respiratory oxidase family. Associates with subunits II, III and IV to form cytochrome c oxidase. Requires Cu(2+) as cofactor. The cofactor is heme.

Its subcellular location is the cell membrane. It catalyses the reaction 4 Fe(II)-[cytochrome c] + O2 + 8 H(+)(in) = 4 Fe(III)-[cytochrome c] + 2 H2O + 4 H(+)(out). The protein operates within energy metabolism; oxidative phosphorylation. Cytochrome c oxidase is the component of the respiratory chain that catalyzes the reduction of oxygen to water. Subunits 1-3 form the functional core of the enzyme complex. CO I is the catalytic subunit of the enzyme. Electrons originating in cytochrome c are transferred via the copper A center of subunit 2 and heme A of subunit 1 to the bimetallic center formed by heme A3 and copper B. This chain is Probable cytochrome c oxidase subunit 1 (ctaD), found in Mycobacterium leprae (strain TN).